The primary structure comprises 388 residues: MNFKLFGSALILSGTALGAGMLAIPMVLAQFGLFYSTLLMLIICAGTTYAALLLTEACSKTELAFGINTVANKTIGKGGQLVTNALFYLLLFCMLIAYILGAADLIKRIFSMMNVEMSIEFAQVAFTLFASAFVVCGTQIIDKLNRLLFFFMISMLVLTLIILIPGMTVENLSQVTNHDKGMLFDTSTILFTSFASMPVIPSLVAYNKEATKQQLRNMVILGSIIPLICYLVWLYAVVGNLTANEITHFSNISDLIQTFSAKNEYIEIILSIFTSLALLTSFLGVAMALYNQNKDMISHNKIVTYVCTFILPLLGAGLAADQFLSVLGYAGVILVFLAIFIPLAMVVTLRKKETEEVHQNLHIYTAEGGKLALGLTLLFGLLLLISQI.

11 helical membrane passes run 5-27 (LFGSALILSGTALGAGMLAIPMV), 31-53 (FGLFYSTLLMLIICAGTTYAALL), 86-106 (LFYLLLFCMLIAYILGAADLI), 121-141 (FAQVAFTLFASAFVVCGTQII), 147-167 (LLFFFMISMLVLTLIILIPGM), 186-206 (TSTILFTSFASMPVIPSLVAY), 218-238 (MVILGSIIPLICYLVWLYAVV), 268-288 (IILSIFTSLALLTSFLGVAMA), 302-322 (IVTYVCTFILPLLGAGLAADQ), 326-346 (VLGYAGVILVFLAIFIPLAMV), and 368-388 (GGKLALGLTLLFGLLLLISQI).

It belongs to the amino acid/polyamine transporter 2 family.

Its subcellular location is the cell inner membrane. Functionally, seems to be involved in glutamine transport. Complements an E.coli glnP deletion mutant. This Aliivibrio fischeri (strain ATCC 700601 / ES114) (Vibrio fischeri) protein is Glutamine transporter 2.